Here is a 358-residue protein sequence, read N- to C-terminus: Pyruvate dehydrogenase E1 component subunit alpha (358 aa).

As to quaternary structure, heterodimer of an alpha and a beta chain. The cofactor is thiamine diphosphate.

The enzyme catalyses N(6)-[(R)-lipoyl]-L-lysyl-[protein] + pyruvate + H(+) = N(6)-[(R)-S(8)-acetyldihydrolipoyl]-L-lysyl-[protein] + CO2. Functionally, the pyruvate dehydrogenase complex catalyzes the overall conversion of pyruvate to acetyl-CoA and CO(2). It contains multiple copies of three enzymatic components: pyruvate dehydrogenase (E1), dihydrolipoamide acetyltransferase (E2) and lipoamide dehydrogenase (E3). The chain is Pyruvate dehydrogenase E1 component subunit alpha (pdhA) from Mycoplasma genitalium (strain ATCC 33530 / DSM 19775 / NCTC 10195 / G37) (Mycoplasmoides genitalium).